An 88-amino-acid chain; its full sequence is Elongation factor 1-beta (88 aa).

This sequence belongs to the EF-1-beta/EF-1-delta family.

Functionally, promotes the exchange of GDP for GTP in EF-1-alpha/GDP, thus allowing the regeneration of EF-1-alpha/GTP that could then be used to form the ternary complex EF-1-alpha/GTP/AAtRNA. This is Elongation factor 1-beta from Haloarcula marismortui (strain ATCC 43049 / DSM 3752 / JCM 8966 / VKM B-1809) (Halobacterium marismortui).